A 321-amino-acid polypeptide reads, in one-letter code: Beta-1,3-N-acetylglucosaminyltransferase manic fringe (321 aa).

Over 1 to 7 (MQCRLPR) the chain is Cytoplasmic. A helical; Signal-anchor for type II membrane protein transmembrane segment spans residues 8-27 (GLAGALLTLLCMGLLCLRYH). Topologically, residues 28–321 (LNLSPQRVQG…TPWCPQLGAR (294 aa)) are lumenal. Residue R70 participates in substrate binding. N109 carries an N-linked (GlcNAc...) asparagine glycan. 2 disulfides stabilise this stretch: C110–C121 and C139–C202. Residue D143 coordinates substrate. Residue D144 participates in Mn(2+) binding. N185 carries N-linked (GlcNAc...) asparagine glycosylation. The active site involves D232. H256 contacts Mn(2+). C306 and C315 are disulfide-bonded.

This sequence belongs to the glycosyltransferase 31 family. Mn(2+) serves as cofactor.

Its subcellular location is the golgi apparatus membrane. It carries out the reaction 3-O-(alpha-L-fucosyl)-L-threonyl-[EGF-like domain protein] + UDP-N-acetyl-alpha-D-glucosamine = 3-O-(N-acetyl-beta-D-glucosaminyl-(1-&gt;3)-alpha-L-fucosyl)-L-threonyl-[EGF-like domain protein] + UDP + H(+). The catalysed reaction is 3-O-(alpha-L-fucosyl)-L-seryl-[EGF-like domain protein] + UDP-N-acetyl-alpha-D-glucosamine = 3-O-(N-acetyl-beta-D-glucosaminyl-(1-&gt;3)-alpha-L-fucosyl)-L-seryl-[EGF-like domain protein] + UDP + H(+). Glycosyltransferase that initiates the elongation of O-linked fucose residues attached to EGF-like repeats in the extracellular domain of Notch molecules. Modulates NOTCH1 activity by modifying O-fucose residues at specific EGF-like domains resulting in inhibition of NOTCH1 activation by JAG1 and enhancement of NOTCH1 activation by DLL1 via an increase in its binding to DLL1. The polypeptide is Beta-1,3-N-acetylglucosaminyltransferase manic fringe (Homo sapiens (Human)).